We begin with the raw amino-acid sequence, 221 residues long: Ribonuclease T (221 aa).

Positions 21-195 (VVIDIESAGF…YDTIQTAYLF (175 aa)) constitute an Exonuclease domain. Residues D24, E26, H182, and D187 each coordinate Mg(2+). Catalysis depends on H182, which acts as the Proton donor/acceptor.

Belongs to the RNase T family. Homodimer. The cofactor is Mg(2+).

Its function is as follows. Trims short 3' overhangs of a variety of RNA species, leaving a one or two nucleotide 3' overhang. Responsible for the end-turnover of tRNA: specifically removes the terminal AMP residue from uncharged tRNA (tRNA-C-C-A). Also appears to be involved in tRNA biosynthesis. The protein is Ribonuclease T of Buchnera aphidicola subsp. Cinara cedri (strain Cc).